The chain runs to 70 residues: Movement protein TGBp3 (70 aa).

Over 1–4 the chain is Lumenal; the sequence is MFPR. A helical transmembrane segment spans residues 5-25; it reads SGLGLAVAAAVVAYLVLLLAQ. Topologically, residues 26 to 70 are cytoplasmic; the sequence is QLYMSNSSQCTIVITGESVSVVGCVYSEAFIELVKGLKPYYHPLG.

The protein belongs to the Tymovirales TGBp3 protein family.

The protein resides in the host endoplasmic reticulum membrane. Plays a role in viral cell-to-cell propagation, by facilitating genome transport to neighboring plant cells through plasmosdesmata. May induce the formation of granular vesicles derived from the Endoplasmic reticulum, which align on actin filaments. The protein is Movement protein TGBp3 of Crataegus (hawthorn).